The primary structure comprises 433 residues: Glutamate-1-semialdehyde 2,1-aminomutase (433 aa).

N6-(pyridoxal phosphate)lysine is present on Lys-270.

Belongs to the class-III pyridoxal-phosphate-dependent aminotransferase family. HemL subfamily. Homodimer. It depends on pyridoxal 5'-phosphate as a cofactor.

The protein localises to the cytoplasm. The catalysed reaction is (S)-4-amino-5-oxopentanoate = 5-aminolevulinate. It participates in porphyrin-containing compound metabolism; protoporphyrin-IX biosynthesis; 5-aminolevulinate from L-glutamyl-tRNA(Glu): step 2/2. This is Glutamate-1-semialdehyde 2,1-aminomutase from Clostridium novyi (strain NT).